The following is a 520-amino-acid chain: Maturase K (520 aa).

This sequence belongs to the intron maturase 2 family. MatK subfamily.

It is found in the plastid. Its subcellular location is the chloroplast. Its function is as follows. Usually encoded in the trnK tRNA gene intron. Probably assists in splicing its own and other chloroplast group II introns. This chain is Maturase K, found in Beaucarnea recurvata (Elephant-foot tree).